Here is a 475-residue protein sequence, read N- to C-terminus: Eukaryotic translation initiation factor 3 subunit L (475 aa).

The PCI domain occupies 257–451 (DAIRMFSHIL…DLDYAMQGDL (195 aa)).

Belongs to the eIF-3 subunit L family. As to quaternary structure, component of the eukaryotic translation initiation factor 3 (eIF-3) complex.

The protein resides in the cytoplasm. Component of the eukaryotic translation initiation factor 3 (eIF-3) complex, which is involved in protein synthesis of a specialized repertoire of mRNAs and, together with other initiation factors, stimulates binding of mRNA and methionyl-tRNAi to the 40S ribosome. The eIF-3 complex specifically targets and initiates translation of a subset of mRNAs involved in cell proliferation. This is Eukaryotic translation initiation factor 3 subunit L from Botryotinia fuckeliana (strain B05.10) (Noble rot fungus).